The sequence spans 79 residues: MKKTFCFILILVCIVLKSVNAEEEDNFEESSLEMETARCASKNERCGNALYGTKGPGCCNGKCICRTVPRKGVNSCRCM.

The N-terminal stretch at 1-21 (MKKTFCFILILVCIVLKSVNA) is a signal peptide. A propeptide spanning residues 22-38 (EEEDNFEESSLEMETAR) is cleaved from the precursor. Cystine bridges form between Cys-39–Cys-59, Cys-46–Cys-63, Cys-58–Cys-78, and Cys-65–Cys-76.

In terms of tissue distribution, expressed by the venom duct.

It is found in the secreted. In terms of biological role, insect-specific toxin that probably acts as an inhibitor of presynaptic insect calcium channels, presumably Cav2 subtype. In vivo, induces immediate paralysis on insects, followed by death when high doses are injected. This Tibellus oblongus (Oblong running crab spider) protein is Omega-phylotoxin-To1a.